A 149-amino-acid polypeptide reads, in one-letter code: MQVILLDKVANLGSLGDQVNVKAGYARNFLVPQGKAVPATKKNVEFFEARRAELEAKLADVLAAANARAEKINALETVTIASKAGDEGKLFGSIGTRDIADAVTAAGVEVAKSEVRLPNGVLRTTGEHEVNFQVHSEVFAKLTVNVVAE.

The protein belongs to the bacterial ribosomal protein bL9 family.

Functionally, binds to the 23S rRNA. This chain is Large ribosomal subunit protein bL9, found in Citrobacter koseri (strain ATCC BAA-895 / CDC 4225-83 / SGSC4696).